The sequence spans 539 residues: Dopamine receptor 2 (539 aa).

Topologically, residues 1 to 113 (MVDDNGSSPE…LPNDRVGLLA (113 aa)) are extracellular. N5, N31, N47, and N68 each carry an N-linked (GlcNAc...) asparagine glycan. A helical membrane pass occupies residues 114–134 (FLFLFSFATVFGNSLVILAVI). Over 135–145 (RERYLHTATNY) the chain is Cytoplasmic. Residues 146–166 (FITSLAVADCLVGLVVMPFSA) traverse the membrane as a helical segment. Over 167-189 (LYEVLENTWFFGTDWCDIWRSLD) the chain is Extracellular. C182 and C261 are joined by a disulfide. Residues 190-206 (VLFSTASILNLCVISLD) traverse the membrane as a helical segment. Topologically, residues 207-227 (RYWAITDPFSYPMRMTVKRAA) are cytoplasmic. A helical membrane pass occupies residues 228 to 248 (GLIAAVWICSSAISFPAIVWW). The Extracellular segment spans residues 249 to 266 (RAARDGEMPAYKCTFTEH). Residues 267–287 (LGYLVFSSTISFYLPLLVMVF) form a helical membrane-spanning segment. The Cytoplasmic portion of the chain corresponds to 288 to 420 (TYCRIYRAAV…FAKEKKAAKT (133 aa)). The segment at 326–387 (GGTTRDQQNQ…EPDDEPLSAL (62 aa)) is disordered. The segment covering 337–352 (SGGGGGGGGGGGGGGS) has biased composition (gly residues). Residues 356-367 (SHSHSHHHHHNH) are compositionally biased toward basic residues. Residues 421 to 441 (LGIVMGVFIICWLPFFVVNLL) form a helical membrane-spanning segment. Topologically, residues 442 to 453 (SGFCIECIEHEE) are extracellular. The helical transmembrane segment at 454–474 (IVSAIVTWLGWINSCMNPVIY) threads the bilayer. The Cytoplasmic portion of the chain corresponds to 475-539 (ACWSRDFRRA…RHNSCEQTYI (65 aa)). 2 S-palmitoyl cysteine lipidation sites follow: C492 and C493.

It belongs to the G-protein coupled receptor 1 family. In terms of tissue distribution, expressed in both central and peripheral nervous systems.

It is found in the cell membrane. Receptor for dopamine. The activity of this receptor is mediated by G proteins which activate adenylyl cyclase. Also capable of generating a calcium signal. In terms of antagonist responses, would be classed with the D1-like dopamine receptor group. This receptor is an attractive candidate for initiating biochemical cascades underlying olfactory learning. The chain is Dopamine receptor 2 (Dop1R2) from Drosophila melanogaster (Fruit fly).